Consider the following 374-residue polypeptide: Methionine import ATP-binding protein MetN 2 (374 aa).

An ABC transporter domain is found at 32 to 271 (VRFVGLGKTY…PQHEVSQTLL (240 aa)). 68–75 (GRSGAGKS) lines the ATP pocket.

This sequence belongs to the ABC transporter superfamily. Methionine importer (TC 3.A.1.24) family. The complex is composed of two ATP-binding proteins (MetN), two transmembrane proteins (MetI) and a solute-binding protein (MetQ).

The protein localises to the cell inner membrane. The catalysed reaction is L-methionine(out) + ATP + H2O = L-methionine(in) + ADP + phosphate + H(+). It carries out the reaction D-methionine(out) + ATP + H2O = D-methionine(in) + ADP + phosphate + H(+). Part of the ABC transporter complex MetNIQ involved in methionine import. Responsible for energy coupling to the transport system. The protein is Methionine import ATP-binding protein MetN 2 of Pseudomonas fluorescens (strain Pf0-1).